The primary structure comprises 174 residues: Dual-action ribosomal maturation protein DarP (174 aa).

It belongs to the DarP family.

It localises to the cytoplasm. Functionally, member of a network of 50S ribosomal subunit biogenesis factors which assembles along the 30S-50S interface, preventing incorrect 23S rRNA structures from forming. Promotes peptidyl transferase center (PTC) maturation. The polypeptide is Dual-action ribosomal maturation protein DarP (Pseudomonas paraeruginosa (strain DSM 24068 / PA7) (Pseudomonas aeruginosa (strain PA7))).